A 572-amino-acid chain; its full sequence is 2-isopropylmalate synthase (572 aa).

Residues 39-313 (PVWMSTDLRD…HPGLDFSRIN (275 aa)) enclose the Pyruvate carboxyltransferase domain. 4 residues coordinate Mg(2+): Asp-48, His-252, His-254, and Asn-288. The segment at 445–572 (VAAPYAYVEH…GVGRQVAATR (128 aa)) is regulatory domain.

It belongs to the alpha-IPM synthase/homocitrate synthase family. LeuA type 2 subfamily. As to quaternary structure, homodimer. Mg(2+) is required as a cofactor.

Its subcellular location is the cytoplasm. The enzyme catalyses 3-methyl-2-oxobutanoate + acetyl-CoA + H2O = (2S)-2-isopropylmalate + CoA + H(+). The protein operates within amino-acid biosynthesis; L-leucine biosynthesis; L-leucine from 3-methyl-2-oxobutanoate: step 1/4. Its function is as follows. Catalyzes the condensation of the acetyl group of acetyl-CoA with 3-methyl-2-oxobutanoate (2-ketoisovalerate) to form 3-carboxy-3-hydroxy-4-methylpentanoate (2-isopropylmalate). This Azoarcus sp. (strain BH72) protein is 2-isopropylmalate synthase.